We begin with the raw amino-acid sequence, 719 residues long: METSALLKQQIAKEIGLSQKHVESVIRLLEDGNTVPFIARYRKEQTGSMDEVQIQTISERWQYIQNLNQRKEEVIRLIAEQDKLTDNLKRKIEQSVKLQEVEDLYRPYKQKRKTKATVAKSKGLEPLADYILTLPQDDHLAATADQYISEEKEVFTREEAIEGAKHIIAEQISDEPTFRKWIRQETFKRGTIKSAAGKSADTDEKNVYEMYYEYEEPIAKVVPHRVLAMNRGEKEDILKVAIEPPADHIKAYLEKQIIKNRSTSVREILQETIEDSYKRLIQPAIEREIRKELSEKADEQAIHIFSENLRKLLLQPPMKGKTVLGVDPAFRTGCKLAVSDETGKVLKIDVIYPHAPVNKTKEAHEKVKKILEQYQVEMVAIGNGTASRETEQFIVNVLRDMPRKIYYVIVNEAGASVYSASELAREEFPDLKVEERSAVSIARRLQDPLAELVKIDPKSVGVGQYQHDVSQKRLNESLRFVVETVVNQVGVNVNTASAALLQYVAGLSKSVAGNVVKKREEIGKFSNRKELKDIPRLGAKTYEQCIGFLRVQEGTEPLDRTGIHPESYKETKALLKKLGLSTEHIGTAELKDKINQLALSETAKELGIGEITLKDICEQLTRPERDPRDKVPKPLLKTDVLQLEDLKEGMELQGTVRNVVDFGAFVDIGVKQDGLVHISKLSNQFVKHPLDVVSVGDIVTVWVDGVDVQKGRVSLSMVK.

Residues 64 to 100 adopt a coiled-coil conformation; sequence IQNLNQRKEEVIRLIAEQDKLTDNLKRKIEQSVKLQE. The 70-residue stretch at 649–718 folds into the S1 motif domain; that stretch reads GMELQGTVRN…QKGRVSLSMV (70 aa).

This is an uncharacterized protein from Bacillus subtilis (strain 168).